Reading from the N-terminus, the 480-residue chain is Radical SAM Nalpha-GlyT isomerase (480 aa).

Residues cysteine 125, cysteine 129, and cysteine 132 each contribute to the iron-sulfur cluster site. Residues 457 to 480 (KIVEPTPPEEDGGERKIIPITQID) form a disordered region.

The catalysed reaction is 5-N(alpha)-glycyl-dTMP in DNA + AH2 + S-adenosyl-L-methionine = 5-C(alpha)-glycyl-dTMP in DNA + 5'-deoxyadenosine + L-methionine + A + H(+). Its function is as follows. Isomerizes 5-N-alpha-glycinylthymidine (Nalpha-GlyT) into 5-Calpha-glycinylthymidine (Calpha-GlyT) as a step in the pathway leading to thymidine hypermodifications in the viral genome. As a final result of the pathway of hypermodification, 5-aminoethyl-2'-deoxyuridine (5-NedU) substitutes for about 30% of thymidines in the viral DNA. These modifications probably prevent degradation of viral genome by the host restriction-modification antiviral defense system. In Pseudomonas phage M6, this protein is Radical SAM Nalpha-GlyT isomerase.